Here is a 315-residue protein sequence, read N- to C-terminus: Aspartate carbamoyltransferase catalytic subunit (315 aa).

Carbamoyl phosphate-binding residues include Arg-65 and Thr-66. Lys-93 provides a ligand contact to L-aspartate. Residues Arg-115, His-143, and Gln-146 each contribute to the carbamoyl phosphate site. Residues Arg-176 and Arg-231 each coordinate L-aspartate. Carbamoyl phosphate-binding residues include Gly-272 and Pro-273.

The protein belongs to the aspartate/ornithine carbamoyltransferase superfamily. ATCase family. As to quaternary structure, heterododecamer (2C3:3R2) of six catalytic PyrB chains organized as two trimers (C3), and six regulatory PyrI chains organized as three dimers (R2).

It catalyses the reaction carbamoyl phosphate + L-aspartate = N-carbamoyl-L-aspartate + phosphate + H(+). The protein operates within pyrimidine metabolism; UMP biosynthesis via de novo pathway; (S)-dihydroorotate from bicarbonate: step 2/3. Catalyzes the condensation of carbamoyl phosphate and aspartate to form carbamoyl aspartate and inorganic phosphate, the committed step in the de novo pyrimidine nucleotide biosynthesis pathway. This Hyphomonas neptunium (strain ATCC 15444) protein is Aspartate carbamoyltransferase catalytic subunit.